The primary structure comprises 752 residues: Multifunctional tryptophan biosynthesis protein (752 aa).

Positions 3 to 202 constitute a Glutamine amidotransferase type-1 domain; it reads FTLLIDNYDS…IQMKGGKWGG (200 aa). 58 to 60 is an L-glutamine binding site; it reads GPG. The active-site Nucleophile; for GATase activity is the Cys-86. 136-137 contributes to the L-glutamine binding site; that stretch reads SL. Active-site for GATase activity residues include His-176 and Glu-178. The segment at 231–495 is indole-3-glycerol phosphate synthase; that stretch reads ILNRIHAQRL…DTKAFLRSLI (265 aa). Positions 509 to 752 are N-(5'-phosphoribosyl)anthranilate isomerase; it reads LVKICGIRST…VEAFVKAVRG (244 aa).

The enzyme catalyses N-(5-phospho-beta-D-ribosyl)anthranilate = 1-(2-carboxyphenylamino)-1-deoxy-D-ribulose 5-phosphate. The catalysed reaction is 1-(2-carboxyphenylamino)-1-deoxy-D-ribulose 5-phosphate + H(+) = (1S,2R)-1-C-(indol-3-yl)glycerol 3-phosphate + CO2 + H2O. It catalyses the reaction chorismate + L-glutamine = anthranilate + pyruvate + L-glutamate + H(+). The protein operates within amino-acid biosynthesis; L-tryptophan biosynthesis; L-tryptophan from chorismate: step 1/5. It functions in the pathway amino-acid biosynthesis; L-tryptophan biosynthesis; L-tryptophan from chorismate: step 3/5. Its pathway is amino-acid biosynthesis; L-tryptophan biosynthesis; L-tryptophan from chorismate: step 4/5. Functionally, trifunctional enzyme bearing the Gln amidotransferase (GATase) domain of anthranilate synthase, indole-glycerolphosphate synthase, and phosphoribosylanthranilate isomerase activities. The protein is Multifunctional tryptophan biosynthesis protein (TRP1) of Cryptococcus neoformans var. neoformans serotype D (strain B-3501A) (Filobasidiella neoformans).